We begin with the raw amino-acid sequence, 1072 residues long: Carbamoyl phosphate synthase large chain (1072 aa).

The interval 1 to 401 is carboxyphosphate synthetic domain; the sequence is MPKRLDINTI…SLLKAVRSLE (401 aa). Arg-129, Arg-169, Gly-175, Gly-176, Lys-208, Ile-210, Glu-215, Gly-241, Val-242, His-243, Gln-284, and Glu-298 together coordinate ATP. The ATP-grasp 1 domain occupies 133-327; the sequence is RTLMQELNEP…IAKLAAKIAV (195 aa). Residues Gln-284, Glu-298, and Asn-300 each contribute to the Mg(2+) site. Residues Gln-284, Glu-298, and Asn-300 each coordinate Mn(2+). The segment at 402 to 546 is oligomerization domain; that stretch reads LGIYHLELNH…YSTYGDENES (145 aa). Residues 547 to 929 form a carbamoyl phosphate synthetic domain region; the sequence is IVTERKSVMV…ALYKGLVAAG (383 aa). Residues 671 to 861 enclose the ATP-grasp 2 domain; that stretch reads EAALTELGIP…MANIATKVIL (191 aa). ATP contacts are provided by Arg-707, Arg-746, Glu-752, Gly-777, Val-778, His-779, Ser-780, Gln-820, and Glu-832. The Mg(2+) site is built by Gln-820, Glu-832, and Asn-834. Positions 820, 832, and 834 each coordinate Mn(2+). Residues 930 to 1072 enclose the MGS-like domain; it reads ISIPTHGSVI…PTTRHEVVHA (143 aa). The segment at 930 to 1072 is allosteric domain; that stretch reads ISIPTHGSVI…PTTRHEVVHA (143 aa).

The protein belongs to the CarB family. As to quaternary structure, composed of two chains; the small (or glutamine) chain promotes the hydrolysis of glutamine to ammonia, which is used by the large (or ammonia) chain to synthesize carbamoyl phosphate. Tetramer of heterodimers (alpha,beta)4. Mg(2+) serves as cofactor. The cofactor is Mn(2+).

The enzyme catalyses hydrogencarbonate + L-glutamine + 2 ATP + H2O = carbamoyl phosphate + L-glutamate + 2 ADP + phosphate + 2 H(+). The catalysed reaction is hydrogencarbonate + NH4(+) + 2 ATP = carbamoyl phosphate + 2 ADP + phosphate + 2 H(+). Its pathway is amino-acid biosynthesis; L-arginine biosynthesis; carbamoyl phosphate from bicarbonate: step 1/1. The protein operates within pyrimidine metabolism; UMP biosynthesis via de novo pathway; (S)-dihydroorotate from bicarbonate: step 1/3. Its function is as follows. Large subunit of the glutamine-dependent carbamoyl phosphate synthetase (CPSase). CPSase catalyzes the formation of carbamoyl phosphate from the ammonia moiety of glutamine, carbonate, and phosphate donated by ATP, constituting the first step of 2 biosynthetic pathways, one leading to arginine and/or urea and the other to pyrimidine nucleotides. The large subunit (synthetase) binds the substrates ammonia (free or transferred from glutamine from the small subunit), hydrogencarbonate and ATP and carries out an ATP-coupled ligase reaction, activating hydrogencarbonate by forming carboxy phosphate which reacts with ammonia to form carbamoyl phosphate. In Bacillus cytotoxicus (strain DSM 22905 / CIP 110041 / 391-98 / NVH 391-98), this protein is Carbamoyl phosphate synthase large chain.